Reading from the N-terminus, the 245-residue chain is tRNA (guanine-N(1)-)-methyltransferase (245 aa).

S-adenosyl-L-methionine contacts are provided by residues G111 and 131–136; that span reads IGDYVL.

This sequence belongs to the RNA methyltransferase TrmD family. As to quaternary structure, homodimer.

It is found in the cytoplasm. It carries out the reaction guanosine(37) in tRNA + S-adenosyl-L-methionine = N(1)-methylguanosine(37) in tRNA + S-adenosyl-L-homocysteine + H(+). Functionally, specifically methylates guanosine-37 in various tRNAs. The chain is tRNA (guanine-N(1)-)-methyltransferase from Staphylococcus haemolyticus (strain JCSC1435).